We begin with the raw amino-acid sequence, 305 residues long: Acyl transferase (305 aa).

Active-site charge relay system residues include serine 114, aspartate 211, and histidine 241.

Belongs to the LuxD family.

It functions in the pathway lipid metabolism; fatty acid reduction for biolumincescence. Acyl transferase is part of the fatty acid reductase system required for aldehyde biosynthesis; it produces fatty acids for the luminescent reaction. This chain is Acyl transferase, found in Vibrio campbellii (strain ATCC BAA-1116).